The primary structure comprises 717 residues: Homeobox protein araucan (717 aa).

Disordered stretches follow at residues 46 to 80, 94 to 130, 317 to 371, 395 to 418, 478 to 516, 549 to 615, and 675 to 717; these read APAMSPTGGQDCQGSQPSGGAGGDASSGALSPNAL, GGSSAGGGGPADLATGGSLDGNGVGTTPTAGGAGGGG, NKMT…AIDE, SGGYPGGGGSSSGHPGGYHPYHHQ, TPPPAYMGHQSMPLQQQQQQQQQQQQAQHQYPPSEAGRD, TNNS…ASQR, and ARLG…KFTN. Residues 94 to 103 show a composition bias toward gly residues; the sequence is GGSSAGGGGP. Residues 255–317 constitute a DNA-binding region (homeobox; TALE-type); that stretch reads LAARRKNATR…NARRRLKKEN (63 aa). The span at 317–327 shows a compositional bias: basic and acidic residues; that stretch reads NKMTWEPKNRT. Ser-336 bears the Phosphoserine mark. Basic and acidic residues predominate over residues 337–347; it reads DDEKDKEDLEP. Positions 395–410 are enriched in gly residues; it reads SGGYPGGGGSSSGHPG. Composition is skewed to low complexity over residues 492-507, 559-589, 599-614, and 687-698; these read QQQQQQQQQQQQAQHQ, PPQQQQPQQQQQQLQQGGTIHTTGSSSGPII, QQQQQLQQQSQSTASQ, and SSGNSSSSSSSS.

The protein belongs to the TALE/IRO homeobox family.

It is found in the nucleus. In terms of biological role, controls proneural and vein forming genes. Positive transcriptional controller of AC-SC (achaete-scute). May act as an activator that interacts with the transcriptional complex assembled on the AC and SC promoters and participates in transcription initiation. In Drosophila melanogaster (Fruit fly), this protein is Homeobox protein araucan (ara).